Consider the following 237-residue polypeptide: Orotidine 5'-phosphate decarboxylase (237 aa).

Substrate-binding positions include D10, K33, 60-69 (DLKLHDIPNT), T124, R186, Q195, G215, and R216. K62 functions as the Proton donor in the catalytic mechanism.

Belongs to the OMP decarboxylase family. Type 1 subfamily. Homodimer.

It carries out the reaction orotidine 5'-phosphate + H(+) = UMP + CO2. Its pathway is pyrimidine metabolism; UMP biosynthesis via de novo pathway; UMP from orotate: step 2/2. Functionally, catalyzes the decarboxylation of orotidine 5'-monophosphate (OMP) to uridine 5'-monophosphate (UMP). The protein is Orotidine 5'-phosphate decarboxylase of Lactiplantibacillus plantarum (strain ATCC BAA-793 / NCIMB 8826 / WCFS1) (Lactobacillus plantarum).